The chain runs to 666 residues: MLGKLDWSAIPFDQPIPLIAGAVVLVAILAVLVWVVVKGHLPYLWHEWITSVDHKRIGVMYILLASIMLLRGGSDAIMMRIQQAVAYQSQGYLPPEHYNQIFSAHGTIMIFFVAMPFVIGLMNLVVPLQLGVRDVAFPTLNSVGFWLTATGALLVNLSLVIGEFARTGWLAFPPLSGLSYSPGVGVDYYAWSLQISGVGTLVAGINLVTTVLKLRTKGMNYLRMPMFCWTTLASNLLIVAAFPILTATLAMLLLDRYLGFHFFTNEAGGNVMMFMNLIWAWGHPEVYILVLPAFGIFSEVVSTFSGKALFGYRSMVLATMAICVISFMVWLHHFFTMGAGPDVNAIFGIASMIIAVPTGVKIYNWLFTMYGGRIRFATPMLWAVGFMVTFIIGGLTGVLVAVPPADFMLHNSMFLVAHFHNVIIGGVLFGAFAGFEYWFPKAFGFRLDERWGKLAFWFTFLGFYVTFMPLYIAGMLGMTRRLQHYDVAAWRPWMLVAAAGMAVLTIGVICQIMQLVVSIRNREALRDRTGDPWDGRSLEWATSSPPPVFNFAFSPDVRGEDAYWDMKTHARQQSFEHDAPEYHDIEMPRNSPTGFICAFFATIMGFALIWHIWWMVILGGIGAFATFVVFAWRDHDEYVIPADEVARIDRINLEERRSLVSMAGVV.

The next 2 helical transmembrane spans lie at 16 to 36 (IPLIAGAVVLVAILAVLVWVV) and 57 to 77 (IGVMYILLASIMLLRGGSDAI). A heme b-binding site is contributed by histidine 105. The next 13 helical transmembrane spans lie at 108–128 (IMIFFVAMPFVIGLMNLVVPL), 142–162 (SVGFWLTATGALLVNLSLVIG), 192–212 (SLQISGVGTLVAGINLVTTVL), 234–254 (SNLLIVAAFPILTATLAMLLL), 277–297 (LIWAWGHPEVYILVLPAFGIF), 315–335 (MVLATMAICVISFMVWLHHFF), 346–366 (IFGIASMIIAVPTGVKIYNWL), 380–400 (MLWAVGFMVTFIIGGLTGVLV), 413–433 (MFLVAHFHNVIIGGVLFGAFA), 456–476 (FWFTFLGFYVTFMPLYIAGML), 493–513 (WMLVAAAGMAVLTIGVICQIM), 591–611 (SPTGFICAFFATIMGFALIWH), and 612–632 (IWWMVILGGIGAFATFVVFAW). Residues histidine 283, tyrosine 287, histidine 332, and histidine 333 each contribute to the Cu cation site. The segment at residues 283 to 287 (HPEVY) is a cross-link (1'-histidyl-3'-tyrosine (His-Tyr)). The heme b site is built by histidine 418 and histidine 420.

Belongs to the heme-copper respiratory oxidase family.

The protein resides in the cell membrane. The enzyme catalyses 4 Fe(II)-[cytochrome c] + O2 + 8 H(+)(in) = 4 Fe(III)-[cytochrome c] + 2 H2O + 4 H(+)(out). The protein operates within energy metabolism; oxidative phosphorylation. The chain is Probable cytochrome c oxidase subunit 1 from Bradyrhizobium diazoefficiens (strain JCM 10833 / BCRC 13528 / IAM 13628 / NBRC 14792 / USDA 110).